A 374-amino-acid polypeptide reads, in one-letter code: Tuliposide A-converting enzyme b1, amyloplastic (374 aa).

The transit peptide at 1 to 68 (MSVALFCGPP…TNSSLSPSPT (68 aa)) directs the protein to the amyloplast. S226 functions as the Acyl-ester intermediate in the catalytic mechanism. Catalysis depends on charge relay system residues D316 and H348.

Belongs to the AB hydrolase superfamily. Homodimer. Highly expressed in pistil and bulb scales. Lower expression in stem, and barely detected in root, leaf, petal and stamen.

The protein resides in the plastid. Its subcellular location is the amyloplast. The catalysed reaction is 6-tuliposide A = tulipalin A + D-glucose. Functionally, lactone-forming carboxylesterases, specifically catalyzing intramolecular transesterification, but not hydrolysis. Involved in the biosynthesis of tulipalins, defensive chemicals that show antimicrobial activities against a broad range of strains of bacteria and fungi. Substrates are 6-tuliposide A &gt; 6-tuliposide B. This chain is Tuliposide A-converting enzyme b1, amyloplastic (TCEA-B1), found in Tulipa gesneriana (Garden tulip).